Consider the following 242-residue polypeptide: Methylthioribulose-1-phosphate dehydratase (242 aa).

Cys-97 contacts substrate. The Zn(2+) site is built by His-115 and His-117. Glu-139 (proton donor/acceptor) is an active-site residue. His-195 serves as a coordination point for Zn(2+).

The protein belongs to the aldolase class II family. MtnB subfamily. In terms of assembly, homotetramer. Interacts with APAF1. May interact with CASP1. It depends on Zn(2+) as a cofactor.

It localises to the cytoplasm. It carries out the reaction 5-(methylsulfanyl)-D-ribulose 1-phosphate = 5-methylsulfanyl-2,3-dioxopentyl phosphate + H2O. The protein operates within amino-acid biosynthesis; L-methionine biosynthesis via salvage pathway; L-methionine from S-methyl-5-thio-alpha-D-ribose 1-phosphate: step 2/6. Its function is as follows. Catalyzes the dehydration of methylthioribulose-1-phosphate (MTRu-1-P) into 2,3-diketo-5-methylthiopentyl-1-phosphate (DK-MTP-1-P). Functions in the methionine salvage pathway, which plays a key role in cancer, apoptosis, microbial proliferation and inflammation. May inhibit the CASP1-related inflammatory response (pyroptosis), the CASP9-dependent apoptotic pathway and the cytochrome c-dependent and APAF1-mediated cell death. The protein is Methylthioribulose-1-phosphate dehydratase of Bos taurus (Bovine).